The sequence spans 178 residues: Large ribosomal subunit protein uL6 (178 aa).

Belongs to the universal ribosomal protein uL6 family. As to quaternary structure, part of the 50S ribosomal subunit.

Functionally, this protein binds to the 23S rRNA, and is important in its secondary structure. It is located near the subunit interface in the base of the L7/L12 stalk, and near the tRNA binding site of the peptidyltransferase center. The protein is Large ribosomal subunit protein uL6 of Campylobacter curvus (strain 525.92).